A 253-amino-acid chain; its full sequence is Major prion protein (253 aa).

A signal peptide spans 1–22; the sequence is MANLGCWMLVLFVATWSDLGLC. The interval 23–38 is interaction with ADGRG6; it reads KKRPKPGGWNTGGSRY. An interaction with GRB2, ERI3 and SYN1 region spans residues 23-230; the sequence is KKRPKPGGWN…ESQAYYQRGS (208 aa). Residues 26-108 form a disordered region; sequence PKPGGWNTGG…WNKPSKPKTS (83 aa). Repeat copies occupy residues 51 to 59, 60 to 67, 68 to 75, 76 to 83, and 84 to 91. Residues 51-91 form a 5 X 8 AA tandem repeats of P-H-G-G-G-W-G-Q region; sequence PQGGGGWGQPHGGGWGQPHGGGWGQPHGGGWGQPHGGGWGQ. Over residues 52 to 95 the composition is skewed to gly residues; sequence QGGGGWGQPHGGGWGQPHGGGWGQPHGGGWGQPHGGGWGQGGGT. Cu(2+) contacts are provided by H61, G62, G63, H69, G70, G71, H77, G78, G79, H85, G86, and G87. A disulfide bridge connects residues C179 and C214. N-linked (GlcNAc...) asparagine glycosylation is found at N181 and N197. S230 carries GPI-anchor amidated serine lipidation. Positions 231–253 are cleaved as a propeptide — removed in mature form; that stretch reads SMVLFSSPPVILLISFLIFLIVG.

Belongs to the prion family. Monomer and homodimer. Has a tendency to aggregate into amyloid fibrils containing a cross-beta spine, formed by a steric zipper of superposed beta-strands. Soluble oligomers may represent an intermediate stage on the path to fibril formation. Copper binding may promote oligomerization. Interacts with GRB2, APP, ERI3/PRNPIP and SYN1. Mislocalized cytosolically exposed PrP interacts with MGRN1; this interaction alters MGRN1 subcellular location and causes lysosomal enlargement. Interacts with APP. Interacts with KIAA1191. Interacts with ADGRG6.

The protein resides in the cell membrane. Its subcellular location is the golgi apparatus. Functionally, its primary physiological function is unclear. May play a role in neuronal development and synaptic plasticity. May be required for neuronal myelin sheath maintenance. May promote myelin homeostasis through acting as an agonist for ADGRG6 receptor. May play a role in iron uptake and iron homeostasis. Soluble oligomers are toxic to cultured neuroblastoma cells and induce apoptosis (in vitro). Association with GPC1 (via its heparan sulfate chains) targets PRNP to lipid rafts. Also provides Cu(2+) or Zn(2+) for the ascorbate-mediated GPC1 deaminase degradation of its heparan sulfate side chains. The sequence is that of Major prion protein (PRNP) from Colobus guereza (Mantled guereza).